Consider the following 563-residue polypeptide: Coiled-coil domain-containing protein 63 (563 aa).

The disordered stretch occupies residues Met1 to Ala29. Positions Lys10–Ala29 are enriched in basic and acidic residues. Coiled coils occupy residues Pro18–His201, Ala233–His291, and Thr341–Asn422.

Plays a role in spermiogenesis. Involved in the elongation of flagella and the formation of sperm heads. In Homo sapiens (Human), this protein is Coiled-coil domain-containing protein 63.